The primary structure comprises 188 residues: Threonylcarbamoyl-AMP synthase (188 aa).

Positions 3–188 (QLHPSDIKDI…RSGKILRNGQ (186 aa)) constitute a YrdC-like domain.

It belongs to the SUA5 family. TsaC subfamily.

Its subcellular location is the cytoplasm. The enzyme catalyses L-threonine + hydrogencarbonate + ATP = L-threonylcarbamoyladenylate + diphosphate + H2O. Required for the formation of a threonylcarbamoyl group on adenosine at position 37 (t(6)A37) in tRNAs that read codons beginning with adenine. Catalyzes the conversion of L-threonine, HCO(3)(-)/CO(2) and ATP to give threonylcarbamoyl-AMP (TC-AMP) as the acyladenylate intermediate, with the release of diphosphate. The chain is Threonylcarbamoyl-AMP synthase from Shewanella baltica (strain OS155 / ATCC BAA-1091).